We begin with the raw amino-acid sequence, 256 residues long: 6-carboxyhexanoate--CoA ligase (256 aa).

This sequence belongs to the BioW family. As to quaternary structure, homodimer. Mg(2+) is required as a cofactor.

It carries out the reaction heptanedioate + ATP + CoA = 6-carboxyhexanoyl-CoA + AMP + diphosphate. The protein operates within metabolic intermediate metabolism; pimeloyl-CoA biosynthesis; pimeloyl-CoA from pimelate: step 1/1. Its function is as follows. Catalyzes the transformation of pimelate into pimeloyl-CoA with concomitant hydrolysis of ATP to AMP. The sequence is that of 6-carboxyhexanoate--CoA ligase from Bacillus amyloliquefaciens (strain ATCC 23350 / DSM 7 / BCRC 11601 / CCUG 28519 / NBRC 15535 / NRRL B-14393 / F).